The primary structure comprises 278 residues: MSRTNFDTLLEAGCHFGHLKRKWNPAMAPYIFMERNGIHIIDLHKTVAKVDEAAEALKQIAKSGKKVLFVATKKQAKQVVAEKAQSVNMPYVIERWPGGMLTNFPTIRKAVKKMATIDKLTNDGTYSNLSKREVLQISRQRAKLDKTLGSIADLTRLPSALFVIDVMKENIAVREANRLGIPVFGIVDTNSDPTNVDFVIPANDDATKSVEVILDACCAAMIEGLEERKAEKIDMEAAGEAPANKGKKKSVKARLDKSDEEAINAAKAAAFIKEDEEA.

The tract at residues 233 to 257 is disordered; it reads IDMEAAGEAPANKGKKKSVKARLDK.

Belongs to the universal ribosomal protein uS2 family.

In Bacteroides thetaiotaomicron (strain ATCC 29148 / DSM 2079 / JCM 5827 / CCUG 10774 / NCTC 10582 / VPI-5482 / E50), this protein is Small ribosomal subunit protein uS2.